Consider the following 259-residue polypeptide: ATP synthase subunit a (259 aa).

5 consecutive transmembrane segments (helical) span residues 29 to 49 (TVNI…IWIF), 90 to 110 (IAPL…MDLI), 134 to 154 (DVNI…IYSI), 208 to 228 (LVFI…LSVP), and 230 to 250 (ALFH…LTIV).

Belongs to the ATPase A chain family. F-type ATPases have 2 components, CF(1) - the catalytic core - and CF(0) - the membrane proton channel. CF(1) has five subunits: alpha(3), beta(3), gamma(1), delta(1), epsilon(1). CF(0) has three main subunits: a(1), b(2) and c(9-12). The alpha and beta chains form an alternating ring which encloses part of the gamma chain. CF(1) is attached to CF(0) by a central stalk formed by the gamma and epsilon chains, while a peripheral stalk is formed by the delta and b chains.

It is found in the cell inner membrane. Functionally, key component of the proton channel; it plays a direct role in the translocation of protons across the membrane. This Aeromonas salmonicida (strain A449) protein is ATP synthase subunit a.